The sequence spans 241 residues: Glucosamine-6-phosphate deaminase (241 aa).

Aspartate 67 (proton acceptor; for enolization step) is an active-site residue. Asparagine 136 (for ring-opening step) is an active-site residue. Residue histidine 138 is the Proton acceptor; for ring-opening step of the active site. Catalysis depends on glutamate 143, which acts as the For ring-opening step.

The protein belongs to the glucosamine/galactosamine-6-phosphate isomerase family. NagB subfamily.

It carries out the reaction alpha-D-glucosamine 6-phosphate + H2O = beta-D-fructose 6-phosphate + NH4(+). It functions in the pathway amino-sugar metabolism; N-acetylneuraminate degradation; D-fructose 6-phosphate from N-acetylneuraminate: step 5/5. Functionally, catalyzes the reversible isomerization-deamination of glucosamine 6-phosphate (GlcN6P) to form fructose 6-phosphate (Fru6P) and ammonium ion. This Bacillus velezensis (strain DSM 23117 / BGSC 10A6 / LMG 26770 / FZB42) (Bacillus amyloliquefaciens subsp. plantarum) protein is Glucosamine-6-phosphate deaminase.